A 226-amino-acid polypeptide reads, in one-letter code: ATP synthase F(0) complex subunit a (226 aa).

Helical transmembrane passes span 6–26 (FATF…IMLF), 68–88 (WALM…LGLL), 97–117 (QLSM…LMGF), 138–158 (VPML…ALAV), 164–184 (ITAG…LCSI), and 193–213 (FIIL…QAYV).

This sequence belongs to the ATPase A chain family. Component of the ATP synthase complex composed at least of ATP5F1A/subunit alpha, ATP5F1B/subunit beta, ATP5MC1/subunit c (homooctomer), MT-ATP6/subunit a, MT-ATP8/subunit 8, ATP5ME/subunit e, ATP5MF/subunit f, ATP5MG/subunit g, ATP5MK/subunit k, ATP5MJ/subunit j, ATP5F1C/subunit gamma, ATP5F1D/subunit delta, ATP5F1E/subunit epsilon, ATP5PF/subunit F6, ATP5PB/subunit b, ATP5PD/subunit d, ATP5PO/subunit OSCP. ATP synthase complex consists of a soluble F(1) head domain (subunits alpha(3) and beta(3)) - the catalytic core - and a membrane F(0) domain - the membrane proton channel (subunits c, a, 8, e, f, g, k and j). These two domains are linked by a central stalk (subunits gamma, delta, and epsilon) rotating inside the F1 region and a stationary peripheral stalk (subunits F6, b, d, and OSCP). Interacts with DNAJC30; interaction is direct.

It is found in the mitochondrion inner membrane. It catalyses the reaction H(+)(in) = H(+)(out). Functionally, subunit a, of the mitochondrial membrane ATP synthase complex (F(1)F(0) ATP synthase or Complex V) that produces ATP from ADP in the presence of a proton gradient across the membrane which is generated by electron transport complexes of the respiratory chain. ATP synthase complex consist of a soluble F(1) head domain - the catalytic core - and a membrane F(1) domain - the membrane proton channel. These two domains are linked by a central stalk rotating inside the F(1) region and a stationary peripheral stalk. During catalysis, ATP synthesis in the catalytic domain of F(1) is coupled via a rotary mechanism of the central stalk subunits to proton translocation. With the subunit c (ATP5MC1), forms the proton-conducting channel in the F(0) domain, that contains two crucial half-channels (inlet and outlet) that facilitate proton movement from the mitochondrial intermembrane space (IMS) into the matrix. Protons are taken up via the inlet half-channel and released through the outlet half-channel, following a Grotthuss mechanism. This Osphranter robustus (Wallaroo) protein is ATP synthase F(0) complex subunit a.